Here is a 73-residue protein sequence, read N- to C-terminus: Large ribosomal subunit protein bL32c (73 aa).

Belongs to the bacterial ribosomal protein bL32 family.

The protein resides in the plastid. Its subcellular location is the chloroplast. The protein is Large ribosomal subunit protein bL32c of Jasminum nudiflorum (Winter jasmine).